We begin with the raw amino-acid sequence, 250 residues long: Indole-3-glycerol phosphate synthase (250 aa).

This sequence belongs to the TrpC family.

The enzyme catalyses 1-(2-carboxyphenylamino)-1-deoxy-D-ribulose 5-phosphate + H(+) = (1S,2R)-1-C-(indol-3-yl)glycerol 3-phosphate + CO2 + H2O. Its pathway is amino-acid biosynthesis; L-tryptophan biosynthesis; L-tryptophan from chorismate: step 4/5. In Bacillus velezensis (strain DSM 23117 / BGSC 10A6 / LMG 26770 / FZB42) (Bacillus amyloliquefaciens subsp. plantarum), this protein is Indole-3-glycerol phosphate synthase.